Here is a 128-residue protein sequence, read N- to C-terminus: Large ribosomal subunit protein uL22 (128 aa).

This sequence belongs to the universal ribosomal protein uL22 family. Part of the 50S ribosomal subunit.

Its function is as follows. This protein binds specifically to 23S rRNA; its binding is stimulated by other ribosomal proteins, e.g. L4, L17, and L20. It is important during the early stages of 50S assembly. It makes multiple contacts with different domains of the 23S rRNA in the assembled 50S subunit and ribosome. The globular domain of the protein is located near the polypeptide exit tunnel on the outside of the subunit, while an extended beta-hairpin is found that lines the wall of the exit tunnel in the center of the 70S ribosome. The polypeptide is Large ribosomal subunit protein uL22 (Nitrobacter hamburgensis (strain DSM 10229 / NCIMB 13809 / X14)).